Consider the following 1947-residue polypeptide: Sodium channel protein type 3 subunit alpha (1947 aa).

Over 1-128 (MAQALLVPPG…KIAIKILVHS (128 aa)) the chain is Cytoplasmic. A disordered region spans residues 28–60 (RAAEEKAKKPKKEQDIDDENKPKPNSDLEAGKN). A compositionally biased stretch (basic and acidic residues) spans 46–57 (ENKPKPNSDLEA). An I repeat occupies 110–455 (ILTPLNPVRK…QQMLEQLKKQ (346 aa)). A helical transmembrane segment spans residues 129–146 (LFSMLIMCTILTNCVFMT). The Extracellular segment spans residues 147 to 152 (LSNPPD). Residues 153–174 (WTKNVEYTFTGIYTFESLIKIL) form a helical membrane-spanning segment. The Cytoplasmic portion of the chain corresponds to 175-188 (ARGFCLEDFTFLRD). Residues 189-206 (PWNWLDFSVIVMAYVTEF) form a helical membrane-spanning segment. At 207–213 (VDLGNVS) the chain is on the extracellular side. N-linked (GlcNAc...) asparagine glycosylation is present at Asn211. The helical transmembrane segment at 214–235 (ALRTFRVLRALKTISVIPGLKT) threads the bilayer. At 236 to 249 (IVGALIQSVKKLSD) the chain is on the cytoplasmic side. The chain crosses the membrane as a helical span at residues 250–269 (VMILTVFCLSVFALIGLQLF). Residues 270–369 (MGNLRNKCLQ…NYGYTSFDTF (100 aa)) lie on the Extracellular side of the membrane. 5 N-linked (GlcNAc...) asparagine glycosylation sites follow: Asn290, Asn296, Asn302, Asn307, and Asn339. The pore-forming intramembrane region spans 370–386 (SWAFLSLFRLMTQDYWE). The Extracellular segment spans residues 387–397 (NLYQLTLRAAG). The chain crosses the membrane as a helical span at residues 398–424 (KTYMIFFVLVIFLGSFYLVNLILAVVA). Over 425–712 (MAYEEQNQAT…LVNLIVMDPF (288 aa)) the chain is Cytoplasmic. A phosphoserine mark is found at Ser484, Ser485, and Ser486. 2 disordered regions span residues 493-529 (SKSA…SESE) and 587-632 (VGSE…ETEV). Residues 500–509 (RNRRKKRRQR) show a composition bias toward basic residues. Basic and acidic residues-rich tracts occupy residues 510–529 (EHLE…SESE) and 596–622 (DEHS…ERRN). One copy of the II repeat lies at 693–965 (CCDSWLKVKH…QIAVGRMQKG (273 aa)). A helical membrane pass occupies residues 713 to 730 (VDLAITICIVLNTLFMAM). Over 731–738 (EHYPMTEQ) the chain is Extracellular. A helical membrane pass occupies residues 739–763 (FSSVLTVGNLVFTGIFTAEMVLKII). The Cytoplasmic segment spans residues 764-773 (AMDPYYYFQE). Residues 774–793 (GWNIFDGIIVSLSLMELGLA) traverse the membrane as a helical segment. The Extracellular segment spans residues 794–797 (NVEG). The helical transmembrane segment at 798–816 (LSVLRSFRLLRVFKLAKSW) threads the bilayer. Over 817 to 834 (PTLNMLIKIIGNSVGALG) the chain is Cytoplasmic. A helical transmembrane segment spans residues 835 to 855 (NLTLVLAIIVFIFAVVGMQLF). At 856 to 880 (GKSYKECVCKINEDCKLPRWHMNDF) the chain is on the extracellular side. Cys864 and Cys870 are disulfide-bonded. The pore-forming intramembrane region spans 881 to 896 (FHSFLIVFRVLCGEWI). Residues 897–907 (ETMWDCMEVAG) lie on the Extracellular side of the membrane. The cysteines at positions 902 and 911 are disulfide-linked. A helical transmembrane segment spans residues 908 to 934 (QTMCLIVFMLVMVIGNLVVLNLFLALL). Residues 935 to 1157 (LSSFSSDNLA…RKTCYSIVEH (223 aa)) lie on the Cytoplasmic side of the membrane. The interval 1070–1113 (EEFSSESELEESKEKLNATSSSEGSTVDVAPPREGEQAEIEPEE) is disordered. Residues 1140–1451 (KGKIWWNLRK…KKYYNAMKKL (312 aa)) form an III repeat. A helical membrane pass occupies residues 1158–1178 (NWFETFIVFMILLSSGALAFE). At 1179 to 1190 (DIYIEQRKTIKT) the chain is on the extracellular side. A helical membrane pass occupies residues 1191–1212 (MLEYADKVFTYIFILEMLLKWV). Residues 1213-1218 (AYGFQT) are Cytoplasmic-facing. The helical transmembrane segment at 1219–1244 (YFTNAWCWLDFLIVDVSLVSLVANAL) threads the bilayer. Residues 1245 to 1253 (GYSELGAIK) are Extracellular-facing. A helical transmembrane segment spans residues 1254–1272 (SLRTLRALRPLRALSRFEG). The Cytoplasmic segment spans residues 1273–1285 (MRVVVNALVGAIP). A helical transmembrane segment spans residues 1286 to 1308 (SIMNVLLVCLIFWLIFSIMGVNL). The Extracellular segment spans residues 1309 to 1354 (FAGKFYHCVNMTTGSMFDMSEVNNFSDCQALGKQARWKNVKVNFDN). The cysteines at positions 1316 and 1336 are disulfide-linked. N-linked (GlcNAc...) asparagine glycosylation is found at Asn1318 and Asn1332. An intramembrane region (pore-forming) is located at residues 1355–1371 (VGAGYLALLQVATFKGW). Residues 1372 to 1394 (MDIMYAAVDSRDVKLQPVYEENL) lie on the Extracellular side of the membrane. Residues 1395–1420 (YMYLYFVIFIIFGSFFTLNLFIGVII) form a helical membrane-spanning segment. The Cytoplasmic portion of the chain corresponds to 1421 to 1478 (DNFNQQKKKFGGQDIFMTEEQKKYYNAMKKLGSKKPQKPIPRPANKFQGMVFDFVTRQ). Position 1453 is a phosphoserine (Ser1453). One copy of the IV repeat lies at 1460-1758 (IPRPANKFQG…WEKFDPDATQ (299 aa)). Residues 1479–1497 (VFDISIMILICLNMVTMMV) traverse the membrane as a helical segment. The Extracellular portion of the chain corresponds to 1498 to 1505 (ETDDQSKY). A helical membrane pass occupies residues 1506-1529 (MTLVLSRINLVFIVLFTGEFLLKL). Residues 1530 to 1539 (ISLRYYYFTI) lie on the Cytoplasmic side of the membrane. Residues 1540–1557 (GWNIFDFVVVILSIVGMF) traverse the membrane as a helical segment. The Extracellular segment spans residues 1558-1569 (LAELIEKYFVSP). Residues 1570-1592 (TLFRVIRLARIGRILRLIKGAKG) traverse the membrane as a helical segment. Residues 1593 to 1605 (IRTLLFALMMSLP) are Cytoplasmic-facing. Residues 1606-1629 (ALFNIGLLLFLVMFIYAIFGMSNF) traverse the membrane as a helical segment. Residues 1630-1651 (AYVKKEAGIDDMFNFETFGNSM) lie on the Extracellular side of the membrane. Residues 1652-1664 (ICLFQITTSAGWD) constitute an intramembrane region (pore-forming). The Extracellular segment spans residues 1665-1696 (GLLAPILNSAPPDCDPDAIHPGSSVKGDCGNP). The chain crosses the membrane as a helical span at residues 1697 to 1722 (SVGIFFFVSYIIISFLVVVNMYIAVI). Topologically, residues 1723–1947 (LENFSVATEE…PEKESKGKEV (225 aa)) are cytoplasmic. One can recognise an IQ domain in the interval 1852–1881 (EEVSAAIIQRNYRCYLLKQRLKNISNTYDK). Residues 1901-1947 (LNGNSTPEKTDGSSSTTSPPSYDSVTKPDKEKFEKDKPEKESKGKEV) form a disordered region. A compositionally biased stretch (basic and acidic residues) spans 1926–1947 (TKPDKEKFEKDKPEKESKGKEV).

The protein belongs to the sodium channel (TC 1.A.1.10) family. Nav1.3/SCN3A subfamily. As to quaternary structure, heterooligomer of an alpha subunit, SCN3A, and 1 to 3 regulatory beta subunits including SCN1B and SCN2B; disulfide-linked with some beta subunits like SCN2B. Interacts with NEDD4L; could regulate expression of SCN3A at the plasma membrane through ubiquitination-regulated endocytosis. May be ubiquitinated by NEDD4L; which would promote its endocytosis. Post-translationally, phosphorylation at Ser-1453 in a highly conserved cytoplasmic loop slows inactivation of the channel and reduces peak sodium currents. As to expression, expressed in enterochromaffin cells in both colon and small bowel (at protein level). Expressed in pancreatic alpha and beta cells.

It is found in the cell membrane. It localises to the basal cell membrane. It catalyses the reaction Na(+)(in) = Na(+)(out). Pore-forming subunit of Nav1.3, a voltage-gated sodium (Nav) channel that directly mediates the depolarizing phase of action potentials in excitable membranes. Navs, also called VGSCs (voltage-gated sodium channels) or VDSCs (voltage-dependent sodium channels), operate by switching between closed and open conformations depending on the voltage difference across the membrane. In the open conformation they allow Na(+) ions to selectively pass through the pore, along their electrochemical gradient. The influx of Na+ ions provokes membrane depolarization, initiating the propagation of electrical signals throughout cells and tissues. In some secretory cell types, it also participates in cell excitability through membrane depolarization and regulates cells responsiveness to stimuli triggering secretion. For instance, it controls the release of serotonin/5-hydroxytryptamine by enterochromaffin cells and is required for both glucagon- and glucose-induced insulin secretion in pancreatic endocrine cells. The protein is Sodium channel protein type 3 subunit alpha of Mus musculus (Mouse).